Reading from the N-terminus, the 67-residue chain is DNA-directed RNA polymerase subunit omega (67 aa).

It belongs to the RNA polymerase subunit omega family. As to quaternary structure, the RNAP catalytic core consists of 2 alpha, 1 beta, 1 beta' and 1 omega subunit. When a sigma factor is associated with the core the holoenzyme is formed, which can initiate transcription.

The enzyme catalyses RNA(n) + a ribonucleoside 5'-triphosphate = RNA(n+1) + diphosphate. Promotes RNA polymerase assembly. Latches the N- and C-terminal regions of the beta' subunit thereby facilitating its interaction with the beta and alpha subunits. This Polaromonas sp. (strain JS666 / ATCC BAA-500) protein is DNA-directed RNA polymerase subunit omega.